A 1012-amino-acid polypeptide reads, in one-letter code: Axonemal dynein light chain domain-containing protein 1 (1012 aa).

Low complexity predominate over residues 1-17; it reads MSLPKTPSTPLNSTSTS. The disordered stretch occupies residues 1 to 34; the sequence is MSLPKTPSTPLNSTSTSESKKLKVSVAKEGTRGL. Coiled-coil stretches lie at residues 317–402, 447–486, and 572–597; these read QRIL…IWSS, EDLA…IVKD, and SERQ…RING. Over residues 841-854 the composition is skewed to acidic residues; sequence PEIDESFKEDEEES. Disordered stretches follow at residues 841–879 and 963–1012; these read PEID…TEKE and LEEL…KKGH. Composition is skewed to basic and acidic residues over residues 855–879 and 963–987; these read KEDR…TEKE and LEEL…REVK. Acidic residues predominate over residues 988–997; it reads EEEEQQEEEE.

In terms of tissue distribution, highly expressed in testis. Highly expressed in the round and late spermatids.

The protein localises to the cytoplasm. In terms of biological role, may be essential for spermiogenesis and male fertility probably by regulating the manchette dynamics, spermatid head shaping and sperm flagellum assembly. This chain is Axonemal dynein light chain domain-containing protein 1, found in Homo sapiens (Human).